A 638-amino-acid polypeptide reads, in one-letter code: Neuroendocrine convertase 2 (638 aa).

The signal sequence occupies residues 1-25; sequence MKGGCVSQWKAAAGLLFCVTVFASA. Positions 26-109 are excised as a propeptide; sequence ERPVFTNHFL…QQEGFDRKKR (84 aa). One can recognise a Peptidase S8 domain in the interval 129 to 453; that stretch reads QWYLINTGQA…YGVLDAGAMV (325 aa). Active-site charge relay system residues include Asp167 and His208. 2 disulfides stabilise this stretch: Cys225–Cys376 and Cys317–Cys347. Asn375 is a glycosylation site (N-linked (GlcNAc...) asparagine). The active-site Charge relay system is the Ser384. The P/Homo B domain occupies 461 to 597; it reads TVPERFHCVG…TLMLHGSQSA (137 aa). An intrachain disulfide couples Cys468 to Cys494. N-linked (GlcNAc...) asparagine glycosylation is found at Asn514 and Asn524.

Belongs to the peptidase S8 family. Furin subfamily.

The protein resides in the cytoplasmic vesicle. It localises to the secretory vesicle. It is found in the secreted. The enzyme catalyses Release of protein hormones and neuropeptides from their precursors, generally by hydrolysis of -Lys-Arg-|- bonds.. Functionally, serine endopeptidase which is involved in the processing of hormone and other protein precursors at sites comprised of pairs of basic amino acid residues. Responsible for the release of glucagon from proglucagon in pancreatic A cells. This is Neuroendocrine convertase 2 (PCSK2) from Sus scrofa (Pig).